The chain runs to 912 residues: WD repeat-containing protein 44 (912 aa).

3 disordered regions span residues 206 to 352 (DIIE…ELTD), 399 to 426 (SNDA…LKQK), and 460 to 481 (RDEV…GMPY). The segment covering 236-258 (NRPPQPINAPPPRPPPPARPAPP) has biased composition (pro residues). Positions 264–278 (GDTDFDRSSGFEYQK) are enriched in basic and acidic residues. Polar residues predominate over residues 288–311 (SPNTLTENMNRDSQPSLDLASATS). The span at 410-422 (KPQSHQSETDGGK) shows a compositional bias: basic and acidic residues. The segment covering 469 to 478 (DDPSSSDDEG) has biased composition (acidic residues). The stretch at 511 to 550 (EHVGAVWTMKFSHCGRLLASAGQDNVVRIWVLKNAFDYFN) is one WD 1 repeat. The tract at residues 559 to 594 (EGRVSPSPSQESLNSSKSDTDGGVFSGTDDVDPDDK) is disordered. Positions 563-575 (SPSPSQESLNSSK) are enriched in low complexity. WD repeat units follow at residues 608 to 646 (GHTA…CLCC), 648 to 688 (QHID…VALW), 693 to 732 (GQTK…YHTQ), 743 to 782 (RVGR…LSMK), 787 to 826 (VNSS…SKFT), 841 to 880 (AHNA…ENIP), and 882 to 912 (GALK…KNIS). The segment at 861-882 (AETSSEKQEGDQAEPVENIPSG) is disordered.

It is found in the cytoplasm. Its subcellular location is the cytosol. The protein localises to the perinuclear region. The protein resides in the endosome membrane. It localises to the golgi apparatus. It is found in the trans-Golgi network. In terms of biological role, downstream effector for rab11. May be involved in vesicle recycling. May also be involved in the inhibition of the intracellular ciliogenesis pathway. This chain is WD repeat-containing protein 44 (wdr44), found in Xenopus laevis (African clawed frog).